The chain runs to 371 residues: UDP-N-acetylglucosamine--N-acetylmuramyl-(pentapeptide) pyrophosphoryl-undecaprenol N-acetylglucosamine transferase (371 aa).

UDP-N-acetyl-alpha-D-glucosamine-binding positions include 15–17, Asn126, Arg172, Ser199, Ile256, 275–280, and Gln301; these read TGG and ALTVSE.

Belongs to the glycosyltransferase 28 family. MurG subfamily.

It is found in the cell inner membrane. The catalysed reaction is di-trans,octa-cis-undecaprenyl diphospho-N-acetyl-alpha-D-muramoyl-L-alanyl-D-glutamyl-meso-2,6-diaminopimeloyl-D-alanyl-D-alanine + UDP-N-acetyl-alpha-D-glucosamine = di-trans,octa-cis-undecaprenyl diphospho-[N-acetyl-alpha-D-glucosaminyl-(1-&gt;4)]-N-acetyl-alpha-D-muramoyl-L-alanyl-D-glutamyl-meso-2,6-diaminopimeloyl-D-alanyl-D-alanine + UDP + H(+). It functions in the pathway cell wall biogenesis; peptidoglycan biosynthesis. Cell wall formation. Catalyzes the transfer of a GlcNAc subunit on undecaprenyl-pyrophosphoryl-MurNAc-pentapeptide (lipid intermediate I) to form undecaprenyl-pyrophosphoryl-MurNAc-(pentapeptide)GlcNAc (lipid intermediate II). The sequence is that of UDP-N-acetylglucosamine--N-acetylmuramyl-(pentapeptide) pyrophosphoryl-undecaprenol N-acetylglucosamine transferase from Francisella philomiragia subsp. philomiragia (strain ATCC 25017 / CCUG 19701 / FSC 153 / O#319-036).